A 79-amino-acid polypeptide reads, in one-letter code: Acyl carrier protein (79 aa).

One can recognise a Carrier domain in the interval 2–77 (ENIEQRVKKI…QAIDYVTAHL (76 aa)). The residue at position 37 (S37) is an O-(pantetheine 4'-phosphoryl)serine.

Belongs to the acyl carrier protein (ACP) family. In terms of processing, 4'-phosphopantetheine is transferred from CoA to a specific serine of apo-ACP by AcpS. This modification is essential for activity because fatty acids are bound in thioester linkage to the sulfhydryl of the prosthetic group.

Its subcellular location is the cytoplasm. The protein operates within lipid metabolism; fatty acid biosynthesis. In terms of biological role, carrier of the growing fatty acid chain in fatty acid biosynthesis. This Aromatoleum aromaticum (strain DSM 19018 / LMG 30748 / EbN1) (Azoarcus sp. (strain EbN1)) protein is Acyl carrier protein.